A 129-amino-acid chain; its full sequence is Lysozyme C (129 aa).

The region spanning 1–129 (KVYGRCELAA…VNAWTRGCRL (129 aa)) is the C-type lysozyme domain. 4 disulfide bridges follow: C6/C127, C30/C115, C64/C80, and C76/C94. Catalysis depends on residues E35 and D52.

The protein belongs to the glycosyl hydrolase 22 family. Monomer.

It is found in the secreted. The enzyme catalyses Hydrolysis of (1-&gt;4)-beta-linkages between N-acetylmuramic acid and N-acetyl-D-glucosamine residues in a peptidoglycan and between N-acetyl-D-glucosamine residues in chitodextrins.. In terms of biological role, lysozymes have primarily a bacteriolytic function; those in tissues and body fluids are associated with the monocyte-macrophage system and enhance the activity of immunoagents. The protein is Lysozyme C (LYZ) of Syrmaticus soemmerringii (Copper pheasant).